We begin with the raw amino-acid sequence, 43 residues long: Protein PsbN (43 aa).

The helical transmembrane segment at 7–29 threads the bilayer; that stretch reads VTIFLSGLLVSFTGYALYTAFGQ.

Belongs to the PsbN family.

Its subcellular location is the plastid. It is found in the chloroplast thylakoid membrane. In terms of biological role, may play a role in photosystem I and II biogenesis. This Ipomoea purpurea (Common morning glory) protein is Protein PsbN.